Reading from the N-terminus, the 430-residue chain is Putative ABC transporter periplasmic-binding protein YcjN (430 aa).

The N-terminal stretch at 1–19 (MIKSKIVLLSALVSCALIS) is a signal peptide.

It belongs to the bacterial solute-binding protein 1 family.

It localises to the periplasm. Its function is as follows. Probably part of the binding-protein-dependent transport system YcjNOP. This chain is Putative ABC transporter periplasmic-binding protein YcjN (ycjN), found in Escherichia coli (strain K12).